We begin with the raw amino-acid sequence, 662 residues long: U6 snRNA-specific terminal uridylyltransferase (662 aa).

Residues D183 and D185 each coordinate Mg(2+). Positions 384–437 (CKFFRELFKYYANFDFTNKAIYGKKAMQKKTLSSAHGGVEESPLMLMDPMDITH) constitute a PAP-associated domain.

This sequence belongs to the DNA polymerase type-B-like family. In terms of assembly, forms a complex composed of sart-3, terminal uridylyltransferase usip-1 and U6 snRNA; complex formation is mediated by usip-1 and sart-3 binding to U6 snRNA. Requires Mg(2+) as cofactor. Mn(2+) is required as a cofactor. In terms of tissue distribution, ubiquitously expressed.

The protein localises to the nucleus. Its subcellular location is the nucleoplasm. The catalysed reaction is RNA(n) + UTP = RNA(n)-3'-uridine ribonucleotide + diphosphate. In terms of biological role, acts as a specific terminal uridylyltransferase for U6 snRNA. Responsible for the addition of UTP at the 3' end of U6 snRNA which stabilizes U6 snRNA. Does not have activity towards modified uridine containing 3'-monophosphorylation or 2'-O-methylation. The polypeptide is U6 snRNA-specific terminal uridylyltransferase (Caenorhabditis elegans).